The sequence spans 263 residues: Dihydropteroate synthase type-3 (263 aa).

A Pterin-binding domain is found at 2–257; it reads SKIFGIVNIT…DVKSLSDALK (256 aa). Asn-9 is a binding site for Mg(2+). Ser-49 lines the 4-aminobenzoate pocket. Positions 82, 101, and 172 each coordinate (7,8-dihydropterin-6-yl)methyl diphosphate. 2 residues coordinate 6-hydroxymethyl-7,8-dihydropterin: Asn-101 and Asp-172. A 4-aminobenzoate-binding site is contributed by Phe-177. Lys-211 is a binding site for (7,8-dihydropterin-6-yl)methyl diphosphate. Residue Lys-211 coordinates 6-hydroxymethyl-7,8-dihydropterin. Ser-212 lines the 4-aminobenzoate pocket. (7,8-dihydropterin-6-yl)methyl diphosphate is bound at residue 245-247; the sequence is RTH.

It belongs to the DHPS family. It depends on Mg(2+) as a cofactor.

It carries out the reaction (7,8-dihydropterin-6-yl)methyl diphosphate + 4-aminobenzoate = 7,8-dihydropteroate + diphosphate. It functions in the pathway cofactor biosynthesis; tetrahydrofolate biosynthesis; 7,8-dihydrofolate from 2-amino-4-hydroxy-6-hydroxymethyl-7,8-dihydropteridine diphosphate and 4-aminobenzoate: step 1/2. In terms of biological role, catalyzes the condensation of para-aminobenzoate (pABA) with 6-hydroxymethyl-7,8-dihydropterin diphosphate (DHPt-PP) to form 7,8-dihydropteroate (H2Pte), the immediate precursor of folate derivatives. Confers resistance to sulfonamide antibiotics, including sulfamethoxazole (SMX), sulfadiazine and sulfisoxazole. This is Dihydropteroate synthase type-3 from Escherichia coli.